A 698-amino-acid polypeptide reads, in one-letter code: Elongation factor G (698 aa).

The tr-type G domain occupies 8 to 284 (ANVRNIGIMA…AVVDYLPSPL (277 aa)). GTP-binding positions include 17–24 (AHIDAGKT), 81–85 (DTPGH), and 135–138 (NKLD).

The protein belongs to the TRAFAC class translation factor GTPase superfamily. Classic translation factor GTPase family. EF-G/EF-2 subfamily.

It localises to the cytoplasm. In terms of biological role, catalyzes the GTP-dependent ribosomal translocation step during translation elongation. During this step, the ribosome changes from the pre-translocational (PRE) to the post-translocational (POST) state as the newly formed A-site-bound peptidyl-tRNA and P-site-bound deacylated tRNA move to the P and E sites, respectively. Catalyzes the coordinated movement of the two tRNA molecules, the mRNA and conformational changes in the ribosome. This Salinispora tropica (strain ATCC BAA-916 / DSM 44818 / JCM 13857 / NBRC 105044 / CNB-440) protein is Elongation factor G.